The following is a 127-amino-acid chain: Probable soluble cytochrome b562 1 (127 aa).

The N-terminal stretch at 1–21 (MRKIPIIAGVFSLLITSCTFA) is a signal peptide. Positions 28 and 123 each coordinate heme b.

Belongs to the cytochrome b562 family. Heme b is required as a cofactor.

Its subcellular location is the periplasm. Its function is as follows. Electron-transport protein of unknown function. In Yersinia pestis, this protein is Probable soluble cytochrome b562 1 (cybC1).